The chain runs to 674 residues: Ribosome biogenesis protein BOP1 homolog (674 aa).

The tract at residues 1–28 is disordered; the sequence is MASTSAATPLKNKRKFENGKKKPKTLKD. The span at 15–28 shows a compositional bias: basic and acidic residues; the sequence is KFENGKKKPKTLKD. WD repeat units lie at residues 342 to 384, 386 to 425, 427 to 458, 459 to 500, 503 to 541, 587 to 626, and 643 to 674; these read GHTG…KTFQ, DGEVTSVSFSPVADRTLLAVAYEGKYVAILNTGCGDRLHV, QTEALLAETPTDAQEDGAVVTWRKSKEKLMLK, MPNE…SQCP, KRKGHVQAVTFHPTQARLFVATKIHVREYDLARCVLVKK, HHTAAVRSVAYHKKYPLLATVSDDGTAMVYYARIYTDFVK, and PNDLCMLHTTWHPTQPWLITAGADGTIALFTY.

Belongs to the WD repeat BOP1/ERB1 family.

It is found in the nucleus. It localises to the nucleolus. Its subcellular location is the nucleoplasm. Its function is as follows. Required for maturation of ribosomal RNAs and formation of the large ribosomal subunit. This chain is Ribosome biogenesis protein BOP1 homolog, found in Caenorhabditis elegans.